A 1337-amino-acid polypeptide reads, in one-letter code: ATP-dependent helicase/nuclease subunit A (1337 aa).

In terms of domain architecture, UvrD-like helicase ATP-binding spans 3 to 484 (FTPSKEQEPA…LDLSDNYRSR (482 aa)). 24–31 (ASAGSGKT) serves as a coordination point for ATP. One can recognise a UvrD-like helicase C-terminal domain in the interval 522–867 (ADRDQASPAT…NVMTIHKSKG (346 aa)).

It belongs to the helicase family. AddA subfamily. In terms of assembly, heterodimer of AddA and AddB/RexB. Mg(2+) serves as cofactor.

It catalyses the reaction Couples ATP hydrolysis with the unwinding of duplex DNA by translocating in the 3'-5' direction.. The enzyme catalyses ATP + H2O = ADP + phosphate + H(+). In terms of biological role, the heterodimer acts as both an ATP-dependent DNA helicase and an ATP-dependent, dual-direction single-stranded exonuclease. Recognizes the chi site generating a DNA molecule suitable for the initiation of homologous recombination. The AddA nuclease domain is required for chi fragment generation; this subunit has the helicase and 3' -&gt; 5' nuclease activities. In Limosilactobacillus fermentum (strain NBRC 3956 / LMG 18251) (Lactobacillus fermentum), this protein is ATP-dependent helicase/nuclease subunit A.